We begin with the raw amino-acid sequence, 457 residues long: UDP-N-acetylmuramoyl-tripeptide--D-alanyl-D-alanine ligase (457 aa).

113–119 (GSNGKTT) contributes to the ATP binding site.

Belongs to the MurCDEF family. MurF subfamily.

The protein resides in the cytoplasm. It catalyses the reaction D-alanyl-D-alanine + UDP-N-acetyl-alpha-D-muramoyl-L-alanyl-gamma-D-glutamyl-meso-2,6-diaminopimelate + ATP = UDP-N-acetyl-alpha-D-muramoyl-L-alanyl-gamma-D-glutamyl-meso-2,6-diaminopimeloyl-D-alanyl-D-alanine + ADP + phosphate + H(+). It functions in the pathway cell wall biogenesis; peptidoglycan biosynthesis. Involved in cell wall formation. Catalyzes the final step in the synthesis of UDP-N-acetylmuramoyl-pentapeptide, the precursor of murein. This Bacillus subtilis (strain 168) protein is UDP-N-acetylmuramoyl-tripeptide--D-alanyl-D-alanine ligase.